We begin with the raw amino-acid sequence, 272 residues long: uncharacterized protein (272 aa).

The protein resides in the periplasm. Functionally, may be involved in ulvan degradation. Ulvan is the main polysaccharide component of the Ulvales (green seaweed) cell wall. It is composed of disaccharide building blocks comprising 3-sulfated rhamnose (Rha3S) linked to D-glucuronic acid (GlcA), L-iduronic acid (IduA), or D-xylose (Xyl). This is an uncharacterized protein from Formosa agariphila (strain DSM 15362 / KCTC 12365 / LMG 23005 / KMM 3901 / M-2Alg 35-1).